The primary structure comprises 347 residues: NADH-ubiquinone oxidoreductase chain 2 (347 aa).

10 helical membrane-spanning segments follow: residues 13–33 (IFTGTLITALSSHWFFAWLGL), 55–75 (AAIKYFLTQATASMILLMAIL), 96–116 (LMIVTALAMKLGMAPFHFWVP), 122–142 (VPLTSGLLLLTWQKLAPISIM), 151–171 (TNILLTLSILSILVGGWGGLN), 178–198 (ILAYSSITHMGWMMAVLPYNP), 199–219 (DITILNLIIYIILTTTAFLIL), 237–257 (LTWLMPLIPSTLLSLGGLPPL), 274–294 (GNLITPTIMAIITLLNLYFYV), and 326–346 (LPTLTILTTLLLPISPLILSI).

This sequence belongs to the complex I subunit 2 family. In terms of assembly, core subunit of respiratory chain NADH dehydrogenase (Complex I) which is composed of 45 different subunits. Interacts with TMEM242.

It localises to the mitochondrion inner membrane. It carries out the reaction a ubiquinone + NADH + 5 H(+)(in) = a ubiquinol + NAD(+) + 4 H(+)(out). Its function is as follows. Core subunit of the mitochondrial membrane respiratory chain NADH dehydrogenase (Complex I) which catalyzes electron transfer from NADH through the respiratory chain, using ubiquinone as an electron acceptor. Essential for the catalytic activity and assembly of complex I. This is NADH-ubiquinone oxidoreductase chain 2 from Pongo abelii (Sumatran orangutan).